A 95-amino-acid polypeptide reads, in one-letter code: Succinate dehydrogenase membrane anchor subunit (95 aa).

Residues 1–19 (MYKTLLAQVFFHSIAKKKL) are Mitochondrial matrix-facing. A helical membrane pass occupies residues 20–40 (YFFWLPRLFSLLLVPGFLFDI). Residue E41 is a topological domain, mitochondrial intermembrane. The helical transmembrane segment at 42–62 (ILFLFHPIILLHASLGLSVII) threads the bilayer. H53 contributes to the heme binding site. Residues 63-74 (EDYIHIETIKFQ) lie on the Mitochondrial matrix side of the membrane. Position 65 (Y65) interacts with a ubiquinone. A helical membrane pass occupies residues 75–95 (YLSLIKLLLVLLINLNILYLL).

Part of an enzyme complex containing four subunits: a flavoprotein, an iron-sulfur protein, plus two membrane-anchoring proteins. It depends on heme as a cofactor.

The protein resides in the mitochondrion inner membrane. Its pathway is carbohydrate metabolism; tricarboxylic acid cycle. Its function is as follows. Membrane-anchoring subunit of succinate dehydrogenase (SDH). The sequence is that of Succinate dehydrogenase membrane anchor subunit (SDH4) from Porphyra purpurea (Red seaweed).